Reading from the N-terminus, the 116-residue chain is MIYGKMMGNTVLKNTGVFYQVIKPLKLHLLYDHSFSLFLKKQPNMGEISPFPYLLSYSYHVIVYLCVLCKVYILYSFVKDFSICLPFSYGSSLLYSLCSNLYIYIYAALPKSKIKL.

2 consecutive transmembrane segments (helical) span residues Leu-55–Phe-77 and Phe-87–Leu-109.

It is found in the membrane. This is an uncharacterized protein from Saccharomyces cerevisiae (strain ATCC 204508 / S288c) (Baker's yeast).